The following is a 521-amino-acid chain: Beta-glucosidase 6 (521 aa).

The signal sequence occupies residues 1-38 (MGRIKSSSGRCSTARLEAVAVLVVVFGVASSSLRGCIA). A beta-D-glucoside is bound by residues glutamine 64, histidine 165, and 210–211 (NE). Glutamate 211 functions as the Proton donor in the catalytic mechanism. A disulfide bridge connects residues cysteine 230 and cysteine 238. A glycan (N-linked (GlcNAc...) asparagine) is linked at asparagine 291. Tyrosine 354 is an a beta-D-glucoside binding site. N-linked (GlcNAc...) asparagine glycans are attached at residues asparagine 362 and asparagine 372. A beta-D-glucoside-binding positions include glutamate 427, tryptophan 477, 484-485 (EW), and phenylalanine 493. Residue glutamate 427 is the Nucleophile of the active site.

It belongs to the glycosyl hydrolase 1 family. In terms of assembly, homodimer.

It is found in the secreted. The catalysed reaction is Hydrolysis of terminal, non-reducing beta-D-glucosyl residues with release of beta-D-glucose.. Hydrolyzes glycosides, oligosaccharides and hydrophobic glycosides. Possesses gibberellin ester beta-D-glucosidase activity. Can hydrolyze gibberellin A4 beta-D-glucosyl ester in vitro. The chain is Beta-glucosidase 6 from Oryza sativa subsp. japonica (Rice).